The sequence spans 327 residues: Transaldolase (327 aa).

The active-site Schiff-base intermediate with substrate is Lys132.

The protein belongs to the transaldolase family. Type 1 subfamily. As to quaternary structure, homodimer.

The protein resides in the cytoplasm. It catalyses the reaction D-sedoheptulose 7-phosphate + D-glyceraldehyde 3-phosphate = D-erythrose 4-phosphate + beta-D-fructose 6-phosphate. Its pathway is carbohydrate degradation; pentose phosphate pathway; D-glyceraldehyde 3-phosphate and beta-D-fructose 6-phosphate from D-ribose 5-phosphate and D-xylulose 5-phosphate (non-oxidative stage): step 2/3. Its function is as follows. Transaldolase is important for the balance of metabolites in the pentose-phosphate pathway. This is Transaldolase from Chlamydia felis (strain Fe/C-56) (Chlamydophila felis).